The primary structure comprises 230 residues: Demethylmenaquinone methyltransferase (230 aa).

S-adenosyl-L-methionine is bound by residues T62, D80, 102 to 103, and S119; that span reads DG.

It belongs to the class I-like SAM-binding methyltransferase superfamily. MenG/UbiE family.

The catalysed reaction is a 2-demethylmenaquinol + S-adenosyl-L-methionine = a menaquinol + S-adenosyl-L-homocysteine + H(+). Its pathway is quinol/quinone metabolism; menaquinone biosynthesis; menaquinol from 1,4-dihydroxy-2-naphthoate: step 2/2. Methyltransferase required for the conversion of demethylmenaquinol (DMKH2) to menaquinol (MKH2). This Streptomyces griseus subsp. griseus (strain JCM 4626 / CBS 651.72 / NBRC 13350 / KCC S-0626 / ISP 5235) protein is Demethylmenaquinone methyltransferase.